The following is a 1671-amino-acid chain: Hybrid signal transduction protein dokA (1671 aa).

A compositionally biased stretch (basic and acidic residues) spans methionine 1–serine 10. Disordered regions lie at residues methionine 1 to glycine 27, aspartate 42 to aspartate 89, glutamine 126 to serine 241, tyrosine 365 to glutamate 451, histidine 579 to isoleucine 603, and serine 629 to alanine 651. Polar residues predominate over residues glutamine 11 to glycine 27. 2 stretches are compositionally biased toward low complexity: residues asparagine 45–asparagine 83 and glutamine 126–glutamate 167. Residues glutamine 168–glutamate 179 show a composition bias toward acidic residues. Residues asparagine 367–asparagine 449 show a composition bias toward low complexity. The span at threonine 591 to serine 600 shows a compositional bias: polar residues. Positions asparagine 1050 to isoleucine 1276 constitute a Histidine kinase domain. One can recognise a Response regulatory domain in the interval tyrosine 1519–isoleucine 1633.

Under osmotic stress conditions, this protein undergoes phosphorylation at a serine residue in the kinase core, which is not due to an autophosphorylation of dokA. This is in contrast to the classic two-component paradigm, which predicts only histidine and aspartate phosphorylation.

Part of the osmoregulatory pathway which leads to the increase of intracellular cAMP concentration in response to hyperosmotic stress. Thought to negatively regulate the rdeA-regA pathway by acting as a phosphatase towards the HPt protein rdeA. Has probably no histidine kinase activity. The protein is Hybrid signal transduction protein dokA (dokA) of Dictyostelium discoideum (Social amoeba).